Consider the following 387-residue polypeptide: uncharacterized protein (387 aa).

Disordered regions lie at residues 1-126 (MDGR…GDDE), 138-169 (GNQG…RNEE), and 275-298 (SSIF…AGNK). A compositionally biased stretch (basic and acidic residues) spans 32 to 45 (SSDHRTSNSAESKK). 2 stretches are compositionally biased toward polar residues: residues 49 to 63 (SGKS…NNDN) and 78 to 93 (DLSS…SKGT). Residues 155–169 (ENGKNDIEKNNRNEE) show a composition bias toward basic and acidic residues. A compositionally biased stretch (polar residues) spans 275-296 (SSIFSDSQAVTTDDEGISSTAG).

The protein belongs to the ThrE exporter (TC 2.A.79) family.

This is an uncharacterized protein from Saccharomyces cerevisiae (strain ATCC 204508 / S288c) (Baker's yeast).